Here is a 111-residue protein sequence, read N- to C-terminus: Phosphoribosyl-ATP pyrophosphatase (111 aa).

Belongs to the PRA-PH family.

It localises to the cytoplasm. It carries out the reaction 1-(5-phospho-beta-D-ribosyl)-ATP + H2O = 1-(5-phospho-beta-D-ribosyl)-5'-AMP + diphosphate + H(+). Its pathway is amino-acid biosynthesis; L-histidine biosynthesis; L-histidine from 5-phospho-alpha-D-ribose 1-diphosphate: step 2/9. The polypeptide is Phosphoribosyl-ATP pyrophosphatase (Pseudomonas putida (strain GB-1)).